We begin with the raw amino-acid sequence, 285 residues long: Glutamate racemase (285 aa).

Substrate is bound by residues 30 to 31 (DS) and 62 to 63 (YG). The Proton donor/acceptor role is filled by Cys94. 95-96 (NT) is a substrate binding site. The active-site Proton donor/acceptor is Cys206. Substrate is bound at residue 207-208 (TH).

This sequence belongs to the aspartate/glutamate racemases family.

It carries out the reaction L-glutamate = D-glutamate. It functions in the pathway cell wall biogenesis; peptidoglycan biosynthesis. Functionally, provides the (R)-glutamate required for cell wall biosynthesis. The protein is Glutamate racemase of Pectobacterium atrosepticum (strain SCRI 1043 / ATCC BAA-672) (Erwinia carotovora subsp. atroseptica).